The chain runs to 336 residues: UPF0284 protein PYRAB00380 (336 aa).

Belongs to the UPF0284 family.

In Pyrococcus abyssi (strain GE5 / Orsay), this protein is UPF0284 protein PYRAB00380.